The chain runs to 70 residues: ATP synthase subunit c (70 aa).

Transmembrane regions (helical) follow at residues 4–24 and 47–67; these read IASAIAIGLAALGAGIGNGLI and FVGVALVEALPIIAVVIAFMV.

It belongs to the ATPase C chain family. In terms of assembly, F-type ATPases have 2 components, F(1) - the catalytic core - and F(0) - the membrane proton channel. F(1) has five subunits: alpha(3), beta(3), gamma(1), delta(1), epsilon(1). F(0) has three main subunits: a(1), b(2) and c(10-14). The alpha and beta chains form an alternating ring which encloses part of the gamma chain. F(1) is attached to F(0) by a central stalk formed by the gamma and epsilon chains, while a peripheral stalk is formed by the delta and b chains.

It is found in the cell membrane. In terms of biological role, f(1)F(0) ATP synthase produces ATP from ADP in the presence of a proton or sodium gradient. F-type ATPases consist of two structural domains, F(1) containing the extramembraneous catalytic core and F(0) containing the membrane proton channel, linked together by a central stalk and a peripheral stalk. During catalysis, ATP synthesis in the catalytic domain of F(1) is coupled via a rotary mechanism of the central stalk subunits to proton translocation. Its function is as follows. Key component of the F(0) channel; it plays a direct role in translocation across the membrane. A homomeric c-ring of between 10-14 subunits forms the central stalk rotor element with the F(1) delta and epsilon subunits. The chain is ATP synthase subunit c from Priestia megaterium (strain ATCC 12872 / QMB1551) (Bacillus megaterium).